Consider the following 285-residue polypeptide: Bifunctional protein FolD (285 aa).

Residues 165 to 167 and Ser190 contribute to the NADP(+) site; that span reads GRS.

This sequence belongs to the tetrahydrofolate dehydrogenase/cyclohydrolase family. As to quaternary structure, homodimer.

It catalyses the reaction (6R)-5,10-methylene-5,6,7,8-tetrahydrofolate + NADP(+) = (6R)-5,10-methenyltetrahydrofolate + NADPH. It carries out the reaction (6R)-5,10-methenyltetrahydrofolate + H2O = (6R)-10-formyltetrahydrofolate + H(+). It participates in one-carbon metabolism; tetrahydrofolate interconversion. Catalyzes the oxidation of 5,10-methylenetetrahydrofolate to 5,10-methenyltetrahydrofolate and then the hydrolysis of 5,10-methenyltetrahydrofolate to 10-formyltetrahydrofolate. In Burkholderia pseudomallei (strain 1710b), this protein is Bifunctional protein FolD.